Here is a 292-residue protein sequence, read N- to C-terminus: MAEITAALVKELREKTDAPMMECKKALTEAEGDLARAEEILRVKLGNKASKAAARVTAEGLIGLYIAADGKQGAVIEVNCETDFVAKNTDFIDFINKLAELVATQNPGDVAALSALPFGEGTVETTRTALVGKIGENISVRRFERIQTPNSLASYVHGGKIGVLVEFSGAEEVGKDLAMHIAATKPKALNADGVNAEDIAAERSVAEQKAAESGKPAEIVAKMVEGSVQKFLKEVTLLSQPFVKNDKQTIEQMLKEKGASITKFVLFVVGEGIEKKTADFASEVAAAAAGRA.

The tract at residues 82 to 85 (TDFV) is involved in Mg(2+) ion dislocation from EF-Tu.

The protein belongs to the EF-Ts family.

The protein localises to the cytoplasm. Functionally, associates with the EF-Tu.GDP complex and induces the exchange of GDP to GTP. It remains bound to the aminoacyl-tRNA.EF-Tu.GTP complex up to the GTP hydrolysis stage on the ribosome. This Bordetella parapertussis (strain 12822 / ATCC BAA-587 / NCTC 13253) protein is Elongation factor Ts.